Consider the following 139-residue polypeptide: Large-conductance mechanosensitive channel (139 aa).

2 helical membrane-spanning segments follow: residues valine 16–leucine 36 and glycine 79–valine 99.

It belongs to the MscL family. Homopentamer.

The protein resides in the cell inner membrane. Channel that opens in response to stretch forces in the membrane lipid bilayer. May participate in the regulation of osmotic pressure changes within the cell. The chain is Large-conductance mechanosensitive channel from Caulobacter vibrioides (strain ATCC 19089 / CIP 103742 / CB 15) (Caulobacter crescentus).